We begin with the raw amino-acid sequence, 469 residues long: Dihydrolipoyl dehydrogenase (469 aa).

Residues 40-48 (EKAVLGGVC), K57, and A120 each bind FAD. The cysteines at positions 48 and 53 are disulfide-linked. NAD(+)-binding positions include 186-190 (GGGAI), E209, and 275-278 (AVGV). Residues D317 and A325 each coordinate FAD. The active-site Proton acceptor is H450.

This sequence belongs to the class-I pyridine nucleotide-disulfide oxidoreductase family. In terms of assembly, homodimer. Requires FAD as cofactor.

It localises to the cytoplasm. The catalysed reaction is N(6)-[(R)-dihydrolipoyl]-L-lysyl-[protein] + NAD(+) = N(6)-[(R)-lipoyl]-L-lysyl-[protein] + NADH + H(+). In terms of biological role, lipoamide dehydrogenase is a component of the alpha-ketoacid dehydrogenase complexes. This is Dihydrolipoyl dehydrogenase (lpd) from Chlorobaculum tepidum (strain ATCC 49652 / DSM 12025 / NBRC 103806 / TLS) (Chlorobium tepidum).